We begin with the raw amino-acid sequence, 76 residues long: MSPFSLLILVICAFSLFFLINLTRGLSILLVFSKNQLLALLLLSIVSLFSISLISALIFFDLLPSTFFGFILLFFF.

The N-terminal stretch at 1 to 25 is a signal peptide; that stretch reads MSPFSLLILVICAFSLFFLINLTRG. Residues 26–34 lie on the Extracellular side of the membrane; that stretch reads LSILLVFSK. Residues 35 to 55 traverse the membrane as a helical segment; it reads NQLLALLLLSIVSLFSISLIS. At 56 to 76 the chain is on the cytoplasmic side; that stretch reads ALIFFDLLPSTFFGFILLFFF.

It is found in the membrane. This is KANTR integral membrane protein from Homo sapiens (Human).